Consider the following 339-residue polypeptide: Fructose-1,6-bisphosphatase, cytosolic (339 aa).

Mg(2+)-binding residues include Glu70, Glu99, Asp120, Leu122, and Asp123. Residues 123–126 (DGSS), Asn214, Tyr246, Tyr266, and Lys276 each bind substrate. Residue Glu282 participates in Mg(2+) binding.

The protein belongs to the FBPase class 1 family. The cofactor is Mg(2+).

It is found in the cytoplasm. It catalyses the reaction beta-D-fructose 1,6-bisphosphate + H2O = beta-D-fructose 6-phosphate + phosphate. In Brassica napus (Rape), this protein is Fructose-1,6-bisphosphatase, cytosolic.